Reading from the N-terminus, the 88-residue chain is Large ribosomal subunit protein bL27 (88 aa).

A disordered region spans residues 1–23 (MAHKKGTGSTRNGRDSNSKRLGV).

This sequence belongs to the bacterial ribosomal protein bL27 family.

This Synechococcus sp. (strain CC9902) protein is Large ribosomal subunit protein bL27.